An 820-amino-acid polypeptide reads, in one-letter code: DNA gyrase subunit A (820 aa).

The Topo IIA-type catalytic domain occupies 31-496; sequence IPDVRDGLKP…TLTNIEIEDL (466 aa). The O-(5'-phospho-DNA)-tyrosine intermediate role is filled by Y119. The short motif at 523 to 529 is the GyrA-box element; that stretch reads QRRGGKG.

This sequence belongs to the type II topoisomerase GyrA/ParC subunit family. In terms of assembly, heterotetramer, composed of two GyrA and two GyrB chains. In the heterotetramer, GyrA contains the active site tyrosine that forms a transient covalent intermediate with DNA, while GyrB binds cofactors and catalyzes ATP hydrolysis.

The protein localises to the cytoplasm. It catalyses the reaction ATP-dependent breakage, passage and rejoining of double-stranded DNA.. A type II topoisomerase that negatively supercoils closed circular double-stranded (ds) DNA in an ATP-dependent manner to modulate DNA topology and maintain chromosomes in an underwound state. Negative supercoiling favors strand separation, and DNA replication, transcription, recombination and repair, all of which involve strand separation. Also able to catalyze the interconversion of other topological isomers of dsDNA rings, including catenanes and knotted rings. Type II topoisomerases break and join 2 DNA strands simultaneously in an ATP-dependent manner. The protein is DNA gyrase subunit A of Lawsonia intracellularis (strain PHE/MN1-00).